Here is a 519-residue protein sequence, read N- to C-terminus: uncharacterized protein (519 aa).

11 helical membrane passes run 52–72 (IYFL…VRGS), 86–106 (LATY…SPIV), 119–139 (TWVV…SYNV), 156–176 (WSFL…GWSL), 199–219 (FFLS…NTFI), 231–251 (LSGY…LVCF), 313–333 (MLSL…VYTG), 343–363 (IWLK…ILVY), 374–394 (VFFP…IQFV), 408–430 (IGGT…PQYV), and 477–497 (TSIV…TPVV).

It is found in the membrane. This is an uncharacterized protein from Schizosaccharomyces pombe (strain 972 / ATCC 24843) (Fission yeast).